Consider the following 737-residue polypeptide: tRNA (guanine(27)-N(2))-dimethyltransferase (737 aa).

The segment covering 1–10 (MENMAEEELL) has biased composition (acidic residues). Residues 1–65 (MENMAEEELL…ASAPVPAPAL (65 aa)) are disordered. Low complexity predominate over residues 17–49 (VVQVPVPTPTPDSARVPAPAPDSAPVSASTPAP). The residue at position 24 (Thr-24) is a Phosphothreonine. The span at 50–62 (ASAPTPASAPVPA) shows a compositional bias: pro residues. Ser-72 is subject to Phosphoserine. Residues 141 to 145 (HKLHR) carry the Nucleolar localization signal motif. The segment at 190–212 (YHCIICSATITRRTDMLGHVRRH) adopts a C2H2-type zinc-finger fold. Residues 233–692 (EILKEADTDV…APLMQFKSIL (460 aa)) form the Trm1 methyltransferase domain. Positions 266, 313, 363, and 364 each coordinate S-adenosyl-L-methionine. Residues Cys-494, Cys-497, Cys-519, and Cys-521 each contribute to the Zn(2+) site. Lys-589 is covalently cross-linked (Glycyl lysine isopeptide (Lys-Gly) (interchain with G-Cter in SUMO2)). Ser-616 is subject to Phosphoserine.

Belongs to the class I-like SAM-binding methyltransferase superfamily. Trm1 family.

It localises to the nucleus. Its subcellular location is the nucleolus. The catalysed reaction is guanosine(27) in tRNA(Tyr) + 2 S-adenosyl-L-methionine = N(2)-dimethylguanosine(27) in tRNA(Tyr) + 2 S-adenosyl-L-homocysteine + 2 H(+). Functionally, specifically dimethylates a single guanine residue at position 27 of tRNA(Tyr) using S-adenosyl-L-methionine as donor of the methyl groups. Dimethylation at position 27 of tRNA(Tyr) is required for efficient translation of tyrosine codons. Also required to maintain 3-(3-amino-3-carboxypropyl)uridine (acp3U) in the D-loop of several cytoplasmic tRNAs. The polypeptide is tRNA (guanine(27)-N(2))-dimethyltransferase (TRMT1L) (Bos taurus (Bovine)).